A 418-amino-acid chain; its full sequence is Putative ion-transport protein YfeO (418 aa).

The next 12 membrane-spanning stretches (helical) occupy residues leucine 10–valine 30, aspartate 54–isoleucine 74, alanine 99–proline 119, glutamate 120–proline 140, isoleucine 149–isoleucine 169, leucine 186–proline 206, isoleucine 223–cysteine 243, valine 258–valine 278, aspartate 300–phenylalanine 320, glycine 322–histidine 342, valine 343–valine 363, and leucine 371–methionine 391.

Belongs to the chloride channel (TC 2.A.49) family.

It localises to the cell membrane. This is Putative ion-transport protein YfeO from Escherichia coli O45:K1 (strain S88 / ExPEC).